Consider the following 174-residue polypeptide: Eukaryotic translation elongation factor 1 epsilon-1 (174 aa).

Position 2 is an N-acetylalanine (Ala2). The segment at 2–56 is N-terminal; the sequence is AAAAELKLLEKSLGLRPGNKYSAQGERQIPVLQTNNGPSLTGLATIATHLVKQAS. The GST C-terminal domain maps to 50–173; the sequence is HLVKQASKEH…FIKNRLYANS (124 aa). The segment at 57–63 is linker; sequence KEHLLGS. A C-terminal region spans residues 64 to 152; it reads TAEEKALVQQ…SRWFCHIQHY (89 aa). An N6-acetyllysine modification is found at Lys138. Residues 153-169 are a coiled coil; that stretch reads PDIRQHLSSVVFIKNRL.

In terms of assembly, part of a multisubunit complex that groups tRNA ligases for Arg (RARS1), Asp (DARS1), Gln (QARS1), Ile (IARS1), Leu (LARS1), Lys (KARS1), Met (MARS1) the bifunctional ligase for Glu and Pro (EPRS1) and the auxiliary subunits AIMP1/p43, AIMP2/p38 and EEF1E1/p18. Can interact simultaneously with MARS1 and EPRS1. Forms a linear complex that contains MARS1, EEF1E1, EPRS1 and AIMP2 that is at the core of the multisubunit complex. Interacts with ATM and ATR. The interaction with ATM, which takes place independently of TP53, is induced by DNA damage that may occur during genotoxic stress or cell growth. The interaction with ATR is enhanced by UV irradiation.

The protein localises to the cytoplasm. It is found in the nucleus. Functionally, positive modulator of ATM response to DNA damage. This is Eukaryotic translation elongation factor 1 epsilon-1 (EEF1E1) from Cricetulus griseus (Chinese hamster).